The following is a 441-amino-acid chain: 5-hydroxytryptamine receptor 3B (441 aa).

The N-terminal stretch at 1-21 (MLSSVMAPLWACILVAAGILA) is a signal peptide. Over 22 to 238 (TDTHHPQDSA…IQFNVVMRRH (217 aa)) the chain is Extracellular. Residues Asn-52, Asn-96, Asn-138, Asn-168, and Asn-203 are each glycosylated (N-linked (GlcNAc...) asparagine). A disulfide bridge links Cys-155 with Cys-169. The chain crosses the membrane as a helical span at residues 239 to 259 (PLVYVVSLLIPSIFLMLVDLG). Over 260-268 (SFYLPPNCR) the chain is Cytoplasmic. Residues 269 to 286 (ARIVFKTSVLVGYTVFRV) traverse the membrane as a helical segment. Residue Asn-287 is glycosylated (N-linked (GlcNAc...) asparagine). At 287–303 (NMSNQVPRSVGSTPLIG) the chain is on the extracellular side. The chain crosses the membrane as a helical span at residues 304–324 (HFFTICMAFLVLSLAKSIVLV). Over 325–414 (KFLHDEQRGG…WLVLLSRFDR (90 aa)) the chain is Cytoplasmic. The HA-stretch; determines single-channel conductance in 5-HT3 receptors stretch occupies residues 381 to 413 (VWSQLQSISNYLQTQDQTDQQEAEWLVLLSRFD). A helical transmembrane segment spans residues 415–435 (LLFQSYLFMLGIYTITLCSLW). Residues 436-441 (ALWGGV) are Extracellular-facing.

This sequence belongs to the ligand-gated ion channel (TC 1.A.9) family. 5-hydroxytryptamine receptor (TC 1.A.9.2) subfamily. HTR3B sub-subfamily. Forms homopentameric as well as heteropentameric serotonin-activated cation-selective channel complexes with HTR3A. The homomeric complex is not functional. Heteropentameric complexes display properties which resemble that of neuronal serotonin-activated channels in vivo. N-glycosylation required for membrane localization. Expressed in the brain cortex, in the caudate nucleus, the hippocampus, the thalamus and the amygdala. Detected in the kidney and testis as well as in monocytes of the spleen, small and large intestine, uterus, prostate, ovary and placenta.

The protein localises to the postsynaptic cell membrane. Its subcellular location is the cell membrane. The enzyme catalyses Na(+)(in) = Na(+)(out). It carries out the reaction K(+)(in) = K(+)(out). It catalyses the reaction Ca(2+)(in) = Ca(2+)(out). Its function is as follows. Forms serotonin (5-hydroxytryptamine/5-HT3)-activated cation-selective channel complexes, which when activated cause fast, depolarizing responses in neurons. The chain is 5-hydroxytryptamine receptor 3B from Homo sapiens (Human).